The chain runs to 365 residues: Histidinol-phosphate aminotransferase (365 aa).

The interval 1–22 (MSRPVPNPGILDIAPYTPGKSP) is disordered. Lys221 is subject to N6-(pyridoxal phosphate)lysine.

It belongs to the class-II pyridoxal-phosphate-dependent aminotransferase family. Histidinol-phosphate aminotransferase subfamily. In terms of assembly, homodimer. The cofactor is pyridoxal 5'-phosphate.

The catalysed reaction is L-histidinol phosphate + 2-oxoglutarate = 3-(imidazol-4-yl)-2-oxopropyl phosphate + L-glutamate. It functions in the pathway amino-acid biosynthesis; L-histidine biosynthesis; L-histidine from 5-phospho-alpha-D-ribose 1-diphosphate: step 7/9. The chain is Histidinol-phosphate aminotransferase from Rhodopseudomonas palustris (strain BisA53).